The following is an 812-amino-acid chain: Probable beta-glucosidase D (812 aa).

Residues 1–18 (MRVPSLSVLSFLLGTALA) form the signal peptide. N-linked (GlcNAc...) asparagine glycans are attached at residues Asn53 and Asn188. Residues 186-248 (ETNRTGGMGG…GMGGGMAGSS (63 aa)) form a disordered region. The segment covering 191 to 207 (GGMGGGGGAPGGGGMGR) has biased composition (gly residues). Residues 211–225 (FSSSVPGGMSPTSSA) are compositionally biased toward polar residues. Positions 236–245 (GGSGMGGGMA) are enriched in gly residues. The N-linked (GlcNAc...) asparagine glycan is linked to Asn296. Asp324 is a catalytic residue. N-linked (GlcNAc...) asparagine glycans are attached at residues Asn360, Asn384, Asn422, Asn501, Asn592, and Asn646.

It belongs to the glycosyl hydrolase 3 family.

The protein resides in the secreted. It carries out the reaction Hydrolysis of terminal, non-reducing beta-D-glucosyl residues with release of beta-D-glucose.. Its pathway is glycan metabolism; cellulose degradation. Its function is as follows. Beta-glucosidases are one of a number of cellulolytic enzymes involved in the degradation of cellulosic biomass. Catalyzes the last step releasing glucose from the inhibitory cellobiose. This Emericella nidulans (strain FGSC A4 / ATCC 38163 / CBS 112.46 / NRRL 194 / M139) (Aspergillus nidulans) protein is Probable beta-glucosidase D (bglD).